The chain runs to 174 residues: Putative serine protease 46 (174 aa).

A Peptidase S1 domain is found at 43–174 (VVKGKLVEVG…IGWGTTGKKG (132 aa)). A disulfide bond links cysteine 68 and cysteine 84. Catalysis depends on charge relay system residues histidine 83 and aspartate 128.

Belongs to the peptidase S1 family.

The chain is Putative serine protease 46 from Homo sapiens (Human).